Consider the following 502-residue polypeptide: MSQEKYIMAIDQGTTSSRAIIFNKKGEKVSSSQKEFTQIFPQAGWVEHNANEIWNSVQSVIAGAFIESGVKPNQIEAIGITNQRETTVVWDKKTGLPIYNAIVWQSRQTAPLAEQLKSQGYVEKFHEKTGLIIDAYFSATKVRWILDHVEGAQERAEKGELLFGTIDTWLVWKLTDGAAHVTDYSNAARTMLYNIKELKWDDEILEILNIPKAILPEVRSNSEIYGKTAPFHFYGGEVPISGMAGDQQAALFGQLAFEPGMVKNTYGTGSFIIMNTGEEMQLSENNLLTTIGYGINGKVYYALEGSIFIAGSAIQWLRDGLRMVENSPESEKYARDSHNNDEVYVVPAFTGLGAPYWNQNARGSVFGLTRGTSKEDFIKATLQSIAYQVRDIIDTMQVDTQTTIQVLKVDGGAAMNNFLMQFQADILGIDIARAKNLETTALGAAFLAGLSVGYWKDLDELKLLNETGELFEPSMNESRKEQLYKGWKKAVKATQVFAEVDD.

Residue Thr-14 coordinates ADP. ATP contacts are provided by Thr-14, Thr-15, and Ser-16. Thr-14 lines the sn-glycerol 3-phosphate pocket. ADP is bound at residue Arg-18. Residues Arg-84, Glu-85, and Tyr-136 each contribute to the sn-glycerol 3-phosphate site. 3 residues coordinate glycerol: Arg-84, Glu-85, and Tyr-136. The residue at position 232 (His-232) is a Phosphohistidine; by HPr. Position 246 (Asp-246) interacts with sn-glycerol 3-phosphate. Residues Asp-246 and Gln-247 each contribute to the glycerol site. ADP contacts are provided by Thr-268 and Gly-311. Residues Thr-268, Gly-311, Gln-315, and Gly-412 each coordinate ATP. Residues Gly-412 and Asn-416 each coordinate ADP.

Belongs to the FGGY kinase family. Homotetramer and homodimer (in equilibrium). In terms of processing, the phosphoenolpyruvate-dependent sugar phosphotransferase system (PTS), including enzyme I, and histidine-containing protein (HPr) are required for the phosphorylation, which leads to the activation of the enzyme.

It catalyses the reaction glycerol + ATP = sn-glycerol 3-phosphate + ADP + H(+). Its pathway is polyol metabolism; glycerol degradation via glycerol kinase pathway; sn-glycerol 3-phosphate from glycerol: step 1/1. With respect to regulation, activated by phosphorylation and inhibited by fructose 1,6-bisphosphate (FBP). Functionally, key enzyme in the regulation of glycerol uptake and metabolism. Catalyzes the phosphorylation of glycerol to yield sn-glycerol 3-phosphate. This Streptococcus pneumoniae (strain 70585) protein is Glycerol kinase.